The following is a 194-amino-acid chain: dCTP deaminase (194 aa).

DCTP-binding positions include 110–115, aspartate 128, 136–138, tyrosine 171, lysine 178, and glutamine 182; these read RSSLAR and VLE. The Proton donor/acceptor role is filled by glutamate 138.

It belongs to the dCTP deaminase family. As to quaternary structure, homotrimer.

The catalysed reaction is dCTP + H2O + H(+) = dUTP + NH4(+). The protein operates within pyrimidine metabolism; dUMP biosynthesis; dUMP from dCTP (dUTP route): step 1/2. In terms of biological role, catalyzes the deamination of dCTP to dUTP. The chain is dCTP deaminase from Haemophilus ducreyi (strain 35000HP / ATCC 700724).